A 236-amino-acid chain; its full sequence is Phosphoglycolate phosphatase (236 aa).

Residue Asp14 is the Nucleophile of the active site. The Mg(2+) site is built by Asp14, Asp16, and Asp177.

It belongs to the HAD-like hydrolase superfamily. CbbY/CbbZ/Gph/YieH family. Mg(2+) serves as cofactor.

The catalysed reaction is 2-phosphoglycolate + H2O = glycolate + phosphate. The protein operates within organic acid metabolism; glycolate biosynthesis; glycolate from 2-phosphoglycolate: step 1/1. Its function is as follows. Specifically catalyzes the dephosphorylation of 2-phosphoglycolate. Is involved in the dissimilation of the intracellular 2-phosphoglycolate formed during the DNA repair of 3'-phosphoglycolate ends, a major class of DNA lesions induced by oxidative stress. The sequence is that of Phosphoglycolate phosphatase from Neisseria gonorrhoeae (strain ATCC 700825 / FA 1090).